The chain runs to 181 residues: Shikimate kinase 2 (181 aa).

12–17 (GCGKTT) contributes to the ATP binding site. 2 residues coordinate Mg(2+): T16 and D32. The substrate site is built by D34, R58, and G79. The tract at residues 112-126 (EAEPEADLRPTLTGK) is LID domain. An ATP-binding site is contributed by R120. R139 contributes to the substrate binding site.

Belongs to the shikimate kinase family. AroL subfamily. As to quaternary structure, monomer. Mg(2+) serves as cofactor.

It is found in the cytoplasm. It catalyses the reaction shikimate + ATP = 3-phosphoshikimate + ADP + H(+). The protein operates within metabolic intermediate biosynthesis; chorismate biosynthesis; chorismate from D-erythrose 4-phosphate and phosphoenolpyruvate: step 5/7. Functionally, catalyzes the specific phosphorylation of the 3-hydroxyl group of shikimic acid using ATP as a cosubstrate. The protein is Shikimate kinase 2 of Salmonella dublin (strain CT_02021853).